Here is a 265-residue protein sequence, read N- to C-terminus: 3-methyl-2-oxobutanoate hydroxymethyltransferase (265 aa).

Positions 45 and 84 each coordinate Mg(2+). Residues aspartate 45–serine 46, aspartate 84, and lysine 112 contribute to the 3-methyl-2-oxobutanoate site. Mg(2+) is bound at residue glutamate 114. Glutamate 181 (proton acceptor) is an active-site residue.

The protein belongs to the PanB family. Homodecamer; pentamer of dimers. Requires Mg(2+) as cofactor.

Its subcellular location is the cytoplasm. It carries out the reaction 3-methyl-2-oxobutanoate + (6R)-5,10-methylene-5,6,7,8-tetrahydrofolate + H2O = 2-dehydropantoate + (6S)-5,6,7,8-tetrahydrofolate. Its pathway is cofactor biosynthesis; (R)-pantothenate biosynthesis; (R)-pantoate from 3-methyl-2-oxobutanoate: step 1/2. Catalyzes the reversible reaction in which hydroxymethyl group from 5,10-methylenetetrahydrofolate is transferred onto alpha-ketoisovalerate to form ketopantoate. The protein is 3-methyl-2-oxobutanoate hydroxymethyltransferase of Wigglesworthia glossinidia brevipalpis.